The sequence spans 173 residues: Methylated-DNA--protein-cysteine methyltransferase (173 aa).

The Nucleophile; methyl group acceptor role is filled by cysteine 143.

The protein belongs to the MGMT family.

The protein localises to the cytoplasm. It catalyses the reaction a 6-O-methyl-2'-deoxyguanosine in DNA + L-cysteinyl-[protein] = S-methyl-L-cysteinyl-[protein] + a 2'-deoxyguanosine in DNA. The catalysed reaction is a 4-O-methyl-thymidine in DNA + L-cysteinyl-[protein] = a thymidine in DNA + S-methyl-L-cysteinyl-[protein]. In terms of biological role, involved in the cellular defense against the biological effects of O6-methylguanine (O6-MeG) and O4-methylthymine (O4-MeT) in DNA. Repairs the methylated nucleobase in DNA by stoichiometrically transferring the methyl group to a cysteine residue in the enzyme. This is a suicide reaction: the enzyme is irreversibly inactivated. This Pyrococcus sp. (strain NA2) protein is Methylated-DNA--protein-cysteine methyltransferase.